A 113-amino-acid polypeptide reads, in one-letter code: uncharacterized protein (113 aa).

This sequence belongs to the HesB/IscA family.

This is an uncharacterized protein from Synechocystis sp. (strain ATCC 27184 / PCC 6803 / Kazusa).